Consider the following 127-residue polypeptide: Profilin (127 aa).

The protein belongs to the profilin family. As to quaternary structure, occurs in many kinds of cells as a complex with monomeric actin in a 1:1 ratio.

The protein resides in the cytoplasm. It is found in the cytoskeleton. Its function is as follows. Binds to actin and affects the structure of the cytoskeleton. At high concentrations, profilin prevents the polymerization of actin, whereas it enhances it at low concentrations. By binding to PIP2, it inhibits the formation of IP3 and DG. In S.pombe, it is essential for cytokinesis. This Schizosaccharomyces pombe (strain 972 / ATCC 24843) (Fission yeast) protein is Profilin (cdc3).